Reading from the N-terminus, the 69-residue chain is Pleurain-A3 (69 aa).

The signal sequence occupies residues Met-1–Cys-22. The propeptide occupies Lys-23–Arg-43. Cysteines 63 and 69 form a disulfide.

This sequence belongs to the frog skin active peptide (FSAP) family. Pleurain subfamily. As to expression, expressed by the skin glands.

It localises to the secreted. Its function is as follows. Antimicrobial peptide. Has activity against Gram-positive and -negative bacteria, and fungi. Has little hemolytic activity on red blood cells. The sequence is that of Pleurain-A3 from Nidirana pleuraden (Yunnan pond frog).